Here is a 248-residue protein sequence, read N- to C-terminus: NH(3)-dependent NAD(+) synthetase (248 aa).

31 to 38 (GVSGGVDS) contacts ATP. Aspartate 37 serves as a coordination point for Mg(2+). Arginine 114 is a deamido-NAD(+) binding site. Threonine 134 contributes to the ATP binding site. Mg(2+) is bound at residue glutamate 139. Residues lysine 147 and aspartate 154 each coordinate deamido-NAD(+). ATP is bound by residues lysine 163 and serine 185. A deamido-NAD(+)-binding site is contributed by 236–237 (HK).

This sequence belongs to the NAD synthetase family. As to quaternary structure, homodimer.

It carries out the reaction deamido-NAD(+) + NH4(+) + ATP = AMP + diphosphate + NAD(+) + H(+). Its pathway is cofactor biosynthesis; NAD(+) biosynthesis; NAD(+) from deamido-NAD(+) (ammonia route): step 1/1. In terms of biological role, catalyzes the ATP-dependent amidation of deamido-NAD to form NAD. Uses ammonia as a nitrogen source. This chain is NH(3)-dependent NAD(+) synthetase, found in Methanoregula boonei (strain DSM 21154 / JCM 14090 / 6A8).